Reading from the N-terminus, the 60-residue chain is Cytotoxin SP15c (60 aa).

Disulfide bonds link cysteine 3–cysteine 21, cysteine 14–cysteine 38, cysteine 42–cysteine 53, and cysteine 54–cysteine 59.

The protein belongs to the three-finger toxin family. Short-chain subfamily. Type IA cytotoxin sub-subfamily. As to quaternary structure, monomer in solution; Homodimer and oligomer in the presence of negatively charged lipids forming a pore with a size ranging between 20 and 30 Angstroms. In terms of tissue distribution, expressed by the venom gland.

It localises to the secreted. Its subcellular location is the target cell membrane. Its function is as follows. Shows cytolytic activity on many different cells by forming pore in lipid membranes. In vivo, increases heart rate or kills the animal by cardiac arrest. In addition, it binds to heparin with high affinity, interacts with Kv channel-interacting protein 1 (KCNIP1) in a calcium-independent manner, and binds to integrin alpha-V/beta-3 (ITGAV/ITGB3) with moderate affinity. In Naja atra (Chinese cobra), this protein is Cytotoxin SP15c.